Here is a 552-residue protein sequence, read N- to C-terminus: Dihydroxy-acid dehydratase (552 aa).

Aspartate 78 contributes to the Mg(2+) binding site. [2Fe-2S] cluster is bound at residue cysteine 119. Aspartate 120 and lysine 121 together coordinate Mg(2+). Residue lysine 121 is modified to N6-carboxylysine. Cysteine 190 lines the [2Fe-2S] cluster pocket. Glutamate 441 contacts Mg(2+). The Proton acceptor role is filled by serine 467.

This sequence belongs to the IlvD/Edd family. As to quaternary structure, homodimer. [2Fe-2S] cluster serves as cofactor. It depends on Mg(2+) as a cofactor.

The enzyme catalyses (2R)-2,3-dihydroxy-3-methylbutanoate = 3-methyl-2-oxobutanoate + H2O. The catalysed reaction is (2R,3R)-2,3-dihydroxy-3-methylpentanoate = (S)-3-methyl-2-oxopentanoate + H2O. The protein operates within amino-acid biosynthesis; L-isoleucine biosynthesis; L-isoleucine from 2-oxobutanoate: step 3/4. It functions in the pathway amino-acid biosynthesis; L-valine biosynthesis; L-valine from pyruvate: step 3/4. Functions in the biosynthesis of branched-chain amino acids. Catalyzes the dehydration of (2R,3R)-2,3-dihydroxy-3-methylpentanoate (2,3-dihydroxy-3-methylvalerate) into 2-oxo-3-methylpentanoate (2-oxo-3-methylvalerate) and of (2R)-2,3-dihydroxy-3-methylbutanoate (2,3-dihydroxyisovalerate) into 2-oxo-3-methylbutanoate (2-oxoisovalerate), the penultimate precursor to L-isoleucine and L-valine, respectively. The chain is Dihydroxy-acid dehydratase from Ignicoccus hospitalis (strain KIN4/I / DSM 18386 / JCM 14125).